We begin with the raw amino-acid sequence, 370 residues long: Anthranilate phosphoribosyltransferase (370 aa).

5-phospho-alpha-D-ribose 1-diphosphate contacts are provided by residues glycine 82, 85 to 86, threonine 90, 92 to 95, 110 to 118, and serine 122; these read GD, NVST, and KHGNRAATS. Glycine 82 is an anthranilate binding site. Serine 94 lines the Mg(2+) pocket. Anthranilate is bound at residue asparagine 113. Arginine 168 is an anthranilate binding site. Positions 226 and 227 each coordinate Mg(2+).

This sequence belongs to the anthranilate phosphoribosyltransferase family. As to quaternary structure, homodimer. Mg(2+) is required as a cofactor.

The catalysed reaction is N-(5-phospho-beta-D-ribosyl)anthranilate + diphosphate = 5-phospho-alpha-D-ribose 1-diphosphate + anthranilate. The protein operates within amino-acid biosynthesis; L-tryptophan biosynthesis; L-tryptophan from chorismate: step 2/5. Its function is as follows. Catalyzes the transfer of the phosphoribosyl group of 5-phosphorylribose-1-pyrophosphate (PRPP) to anthranilate to yield N-(5'-phosphoribosyl)-anthranilate (PRA). In Methanosarcina mazei (strain ATCC BAA-159 / DSM 3647 / Goe1 / Go1 / JCM 11833 / OCM 88) (Methanosarcina frisia), this protein is Anthranilate phosphoribosyltransferase.